A 440-amino-acid polypeptide reads, in one-letter code: Enolase 1 (440 aa).

Substrate is bound by residues His161 and Glu170. Glu213 functions as the Proton donor in the catalytic mechanism. 3 residues coordinate Mg(2+): Asp248, Glu297, and Asp324. Substrate is bound by residues Glu297 and Asp324. The active-site Proton acceptor is the Lys349. Substrate contacts are provided by residues 376-379 (SHRS) and Lys400.

The protein belongs to the enolase family. In terms of assembly, homodimer. It depends on Mg(2+) as a cofactor.

The protein localises to the cytoplasm. The enzyme catalyses (2R)-2-phosphoglycerate = phosphoenolpyruvate + H2O. The protein operates within carbohydrate degradation; glycolysis; pyruvate from D-glyceraldehyde 3-phosphate: step 4/5. The polypeptide is Enolase 1 (ENO1) (Candida albicans (strain SC5314 / ATCC MYA-2876) (Yeast)).